The chain runs to 464 residues: ATP synthase subunit beta (464 aa).

G154 to T161 is an ATP binding site.

Belongs to the ATPase alpha/beta chains family. F-type ATPases have 2 components, CF(1) - the catalytic core - and CF(0) - the membrane proton channel. CF(1) has five subunits: alpha(3), beta(3), gamma(1), delta(1), epsilon(1). CF(0) has three main subunits: a(1), b(2) and c(9-12). The alpha and beta chains form an alternating ring which encloses part of the gamma chain. CF(1) is attached to CF(0) by a central stalk formed by the gamma and epsilon chains, while a peripheral stalk is formed by the delta and b chains.

Its subcellular location is the cell inner membrane. The catalysed reaction is ATP + H2O + 4 H(+)(in) = ADP + phosphate + 5 H(+)(out). Functionally, produces ATP from ADP in the presence of a proton gradient across the membrane. The catalytic sites are hosted primarily by the beta subunits. This Blochmanniella floridana protein is ATP synthase subunit beta.